The sequence spans 155 residues: Ribosome maturation factor RimP (155 aa).

This sequence belongs to the RimP family.

It is found in the cytoplasm. Functionally, required for maturation of 30S ribosomal subunits. In Salinibacter ruber (strain DSM 13855 / M31), this protein is Ribosome maturation factor RimP.